The following is a 508-amino-acid chain: Photosystem II CP47 reaction center protein (508 aa).

Transmembrane regions (helical) follow at residues 21 to 36 (SVHIMHTALVSGWAGS), 101 to 115 (IVFSGLCFLAAIWHW), 140 to 156 (GIHLFLAGVACFGFGAF), 203 to 218 (IAAGTLGILAGLFHLS), 237 to 252 (VLSSSIAAVFFAAFVV), and 457 to 472 (TFALLFFFGHIWHGAR).

Belongs to the PsbB/PsbC family. PsbB subfamily. PSII is composed of 1 copy each of membrane proteins PsbA, PsbB, PsbC, PsbD, PsbE, PsbF, PsbH, PsbI, PsbJ, PsbK, PsbL, PsbM, PsbT, PsbX, PsbY, PsbZ, Psb30/Ycf12, at least 3 peripheral proteins of the oxygen-evolving complex and a large number of cofactors. It forms dimeric complexes. Requires Binds multiple chlorophylls. PSII binds additional chlorophylls, carotenoids and specific lipids. as cofactor.

The protein resides in the plastid. The protein localises to the chloroplast thylakoid membrane. Functionally, one of the components of the core complex of photosystem II (PSII). It binds chlorophyll and helps catalyze the primary light-induced photochemical processes of PSII. PSII is a light-driven water:plastoquinone oxidoreductase, using light energy to abstract electrons from H(2)O, generating O(2) and a proton gradient subsequently used for ATP formation. This is Photosystem II CP47 reaction center protein from Oryza nivara (Indian wild rice).